The primary structure comprises 60 residues: Large ribosomal subunit protein bL32 (60 aa).

The interval 1 to 60 is disordered; sequence MAVQQNKKTPSKRGMHRSHDFLVAPQLSVEPTTGETHMRHHISPNGFYRGRKVLKTKNDE. Positions 49–60 are enriched in basic residues; it reads RGRKVLKTKNDE.

Belongs to the bacterial ribosomal protein bL32 family.

The sequence is that of Large ribosomal subunit protein bL32 from Janthinobacterium sp. (strain Marseille) (Minibacterium massiliensis).